A 406-amino-acid polypeptide reads, in one-letter code: Membrane protein UL43 homolog (406 aa).

Transmembrane regions (helical) follow at residues L48–V68, A71–V91, C103–S123, L126–V146, I162–Y182, Y188–A208, S266–I286, L299–Y319, I339–A359, and V386–S406.

Belongs to the alphaherpesvirinae HHV-1 UL43 family.

It localises to the membrane. This chain is Membrane protein UL43 homolog, found in Varicella-zoster virus (strain Dumas) (HHV-3).